The following is a 430-amino-acid chain: tRNA(Ile)-lysidine synthase (430 aa).

Position 21–26 (21–26 (SGGLDS)) interacts with ATP.

Belongs to the tRNA(Ile)-lysidine synthase family.

The protein localises to the cytoplasm. The enzyme catalyses cytidine(34) in tRNA(Ile2) + L-lysine + ATP = lysidine(34) in tRNA(Ile2) + AMP + diphosphate + H(+). Its function is as follows. Ligates lysine onto the cytidine present at position 34 of the AUA codon-specific tRNA(Ile) that contains the anticodon CAU, in an ATP-dependent manner. Cytidine is converted to lysidine, thus changing the amino acid specificity of the tRNA from methionine to isoleucine. This is tRNA(Ile)-lysidine synthase from Salmonella choleraesuis (strain SC-B67).